The primary structure comprises 362 residues: Biotin synthase (362 aa).

The region spanning 70 to 305 (CCGNVVDLCS…QQIIRYAGGR (236 aa)) is the Radical SAM core domain. Residues cysteine 88, cysteine 92, and cysteine 95 each coordinate [4Fe-4S] cluster. [2Fe-2S] cluster contacts are provided by cysteine 133, cysteine 170, cysteine 230, and arginine 300.

This sequence belongs to the radical SAM superfamily. Biotin synthase family. Homodimer. The cofactor is [4Fe-4S] cluster. [2Fe-2S] cluster is required as a cofactor.

It carries out the reaction (4R,5S)-dethiobiotin + (sulfur carrier)-SH + 2 reduced [2Fe-2S]-[ferredoxin] + 2 S-adenosyl-L-methionine = (sulfur carrier)-H + biotin + 2 5'-deoxyadenosine + 2 L-methionine + 2 oxidized [2Fe-2S]-[ferredoxin]. Its pathway is cofactor biosynthesis; biotin biosynthesis; biotin from 7,8-diaminononanoate: step 2/2. Its function is as follows. Catalyzes the conversion of dethiobiotin (DTB) to biotin by the insertion of a sulfur atom into dethiobiotin via a radical-based mechanism. This Synechocystis sp. (strain ATCC 27184 / PCC 6803 / Kazusa) protein is Biotin synthase.